Here is a 201-residue protein sequence, read N- to C-terminus: Proteasome subunit beta type-2 (201 aa).

Position 1 is an N-acetylmethionine (Met-1).

This sequence belongs to the peptidase T1B family. The 26S proteasome consists of a 20S proteasome core and two 19S regulatory subunits. The 20S proteasome core is a barrel-shaped complex made of 28 subunits that are arranged in four stacked rings. The two outer rings are each formed by seven alpha subunits, and the two inner rings are formed by seven beta subunits. The proteolytic activity is exerted by three beta-subunits PSMB5, PSMB6 and PSMB7. In terms of assembly, (Microbial infection) Interacts with HIV-1 protein Tat.

Its subcellular location is the cytoplasm. It is found in the nucleus. In terms of biological role, non-catalytic component of the 20S core proteasome complex involved in the proteolytic degradation of most intracellular proteins. This complex plays numerous essential roles within the cell by associating with different regulatory particles. Associated with two 19S regulatory particles, forms the 26S proteasome and thus participates in the ATP-dependent degradation of ubiquitinated proteins. The 26S proteasome plays a key role in the maintenance of protein homeostasis by removing misfolded or damaged proteins that could impair cellular functions, and by removing proteins whose functions are no longer required. Associated with the PA200 or PA28, the 20S proteasome mediates ubiquitin-independent protein degradation. This type of proteolysis is required in several pathways including spermatogenesis (20S-PA200 complex) or generation of a subset of MHC class I-presented antigenic peptides (20S-PA28 complex). The chain is Proteasome subunit beta type-2 from Homo sapiens (Human).